We begin with the raw amino-acid sequence, 187 residues long: MSITEYATELKGALRQYPNFPQEGILFEDFLPIFRDPQLFKKLIESFKLHLQEKFTGKKIDYVIGLEARGFLFGPALALALDAGFVPVRKQGKLAGEVVHAVYAKEYGEDVFEIQADSIPEHSNVVIVDDIIATGGSAKAAGDLALQLNANILEFCFVMELDFLKGTQKLQAPSFTLLSGQEEALSK.

133-137 is an AMP binding site; it reads ATGGS.

It belongs to the purine/pyrimidine phosphoribosyltransferase family. As to quaternary structure, homodimer. Mg(2+) is required as a cofactor.

Its subcellular location is the cytoplasm. It localises to the nucleus. The enzyme catalyses AMP + diphosphate = 5-phospho-alpha-D-ribose 1-diphosphate + adenine. Its pathway is purine metabolism; AMP biosynthesis via salvage pathway; AMP from adenine: step 1/1. Functionally, catalyzes a salvage reaction resulting in the formation of AMP, that is energically less costly than de novo synthesis. This chain is Adenine phosphoribosyltransferase (APT1), found in Kluyveromyces lactis (strain ATCC 8585 / CBS 2359 / DSM 70799 / NBRC 1267 / NRRL Y-1140 / WM37) (Yeast).